The sequence spans 315 residues: Glycine--tRNA ligase alpha subunit (315 aa).

This sequence belongs to the class-II aminoacyl-tRNA synthetase family. In terms of assembly, tetramer of two alpha and two beta subunits.

The protein localises to the cytoplasm. The catalysed reaction is tRNA(Gly) + glycine + ATP = glycyl-tRNA(Gly) + AMP + diphosphate. The sequence is that of Glycine--tRNA ligase alpha subunit from Pseudomonas paraeruginosa (strain DSM 24068 / PA7) (Pseudomonas aeruginosa (strain PA7)).